Here is a 185-residue protein sequence, read N- to C-terminus: MVSRVLALISVAMLVGARPYVQNVGDVDLNDVDATVGTGVVDTGMSGDLLAGLLANGLLADLLSEDADGHIPEVTGSSTEEATSSSTWSGASSKPTDSAPTQCNSGTLQCCESTTEAKDIDRVLLSTLLGVDVGSITGLIGKNCSPVSVVGVGAGSTCSTQTVCCDGDSFDGLINLGCKSGNVAV.

A signal peptide spans 1–17; sequence MVSRVLALISVAMLVGA. Residues 70–104 are disordered; the sequence is HIPEVTGSSTEEATSSSTWSGASSKPTDSAPTQCN. Residues 75–93 show a composition bias toward low complexity; the sequence is TGSSTEEATSSSTWSGASS. The span at 94 to 104 shows a compositional bias: polar residues; sequence KPTDSAPTQCN. Cystine bridges form between Cys-103-Cys-164, Cys-110-Cys-158, Cys-111-Cys-144, and Cys-165-Cys-178.

It belongs to the fungal hydrophobin family. In terms of assembly, self-assembles to form functional amyloid fibrils called rodlets. Self-assembly into fibrillar rodlets occurs spontaneously at hydrophobic:hydrophilic interfaces and the rodlets further associate laterally to form amphipathic monolayers.

Its subcellular location is the secreted. It is found in the cell wall. Its function is as follows. Aerial growth, conidiation, and dispersal of filamentous fungi in the environment rely upon a capability of their secreting small amphipathic proteins called hydrophobins (HPBs) with low sequence identity. Class I can self-assemble into an outermost layer of rodlet bundles on aerial cell surfaces, conferring cellular hydrophobicity that supports fungal growth, development and dispersal; whereas Class II form highly ordered films at water-air interfaces through intermolecular interactions but contribute nothing to the rodlet structure. SC6 is a dikaryon-specific class I hydrophobin that contributes to the formation of aerial hyphae and fruiting bodies. The chain is Class I hydrophobin SC6 from Schizophyllum commune (Split gill fungus).